Consider the following 344-residue polypeptide: Ferrochelatase (344 aa).

Fe cation is bound by residues H214 and E295.

Belongs to the ferrochelatase family.

It localises to the cytoplasm. It catalyses the reaction heme b + 2 H(+) = protoporphyrin IX + Fe(2+). Its pathway is porphyrin-containing compound metabolism; protoheme biosynthesis; protoheme from protoporphyrin-IX: step 1/1. In terms of biological role, catalyzes the ferrous insertion into protoporphyrin IX. In Rhizobium leguminosarum bv. trifolii (strain WSM2304), this protein is Ferrochelatase.